The sequence spans 170 residues: Ubiquitin-conjugating enzyme E2 2 (170 aa).

The UBC core domain maps to 4-150; it reads PARRRLMRDF…VKETVEKSWE (147 aa). Cys88 serves as the catalytic Glycyl thioester intermediate. The tract at residues 148-170 is disordered; that stretch reads SWEDDLKDMDDGDDDDDDDDDDD. Over residues 152-170 the composition is skewed to acidic residues; that stretch reads DLKDMDDGDDDDDDDDDDD.

This sequence belongs to the ubiquitin-conjugating enzyme family.

It localises to the cytoplasm. It is found in the nucleus. The catalysed reaction is S-ubiquitinyl-[E1 ubiquitin-activating enzyme]-L-cysteine + [E2 ubiquitin-conjugating enzyme]-L-cysteine = [E1 ubiquitin-activating enzyme]-L-cysteine + S-ubiquitinyl-[E2 ubiquitin-conjugating enzyme]-L-cysteine.. It functions in the pathway protein modification; protein ubiquitination. Its function is as follows. Catalyzes the covalent attachment of ubiquitin to other proteins. Plays a role in transcription regulation by catalyzing the monoubiquitination of histone H2B to form H2BK123ub1. H2BK123ub1 gives a specific tag for epigenetic transcriptional activation and is also a prerequisite for H3K4me and H3K79me formation. Also involved in postreplication repair of UV-damaged DNA, in N-end rule-dependent protein degradation and in sporulation. This Eremothecium gossypii (strain ATCC 10895 / CBS 109.51 / FGSC 9923 / NRRL Y-1056) (Yeast) protein is Ubiquitin-conjugating enzyme E2 2 (UBC2).